The primary structure comprises 75 residues: Conotoxin TsMEKL-011 (75 aa).

A signal peptide spans 1 to 19; it reads MEKLTILLLVAAVLMSTQA. A propeptide spanning residues 20–45 is cleaved from the precursor; that stretch reads LIQRGGAKRRKVNFFSIREPGAEDWR. Intrachain disulfides connect Cys-49-Cys-63, Cys-56-Cys-67, and Cys-62-Cys-71.

Belongs to the conotoxin O2 superfamily. In terms of tissue distribution, expressed by the venom duct.

Its subcellular location is the secreted. The sequence is that of Conotoxin TsMEKL-011 from Conus tessulatus (Tessellate cone).